Here is a 512-residue protein sequence, read N- to C-terminus: 2,3-bisphosphoglycerate-independent phosphoglycerate mutase (512 aa).

Mn(2+) is bound by residues Asp12 and Ser62. Ser62 serves as the catalytic Phosphoserine intermediate. Substrate contacts are provided by residues His123, 153 to 154 (RD), Arg185, Arg191, 260 to 263 (RPDR), and Lys333. Positions 400, 404, 441, 442, and 460 each coordinate Mn(2+).

The protein belongs to the BPG-independent phosphoglycerate mutase family. Monomer. Mn(2+) is required as a cofactor.

The catalysed reaction is (2R)-2-phosphoglycerate = (2R)-3-phosphoglycerate. Its pathway is carbohydrate degradation; glycolysis; pyruvate from D-glyceraldehyde 3-phosphate: step 3/5. In terms of biological role, catalyzes the interconversion of 2-phosphoglycerate and 3-phosphoglycerate. In Clostridium perfringens (strain SM101 / Type A), this protein is 2,3-bisphosphoglycerate-independent phosphoglycerate mutase.